The following is a 338-amino-acid chain: UPF0284 protein PAE0372 (338 aa).

This sequence belongs to the UPF0284 family.

This is UPF0284 protein PAE0372 from Pyrobaculum aerophilum (strain ATCC 51768 / DSM 7523 / JCM 9630 / CIP 104966 / NBRC 100827 / IM2).